The primary structure comprises 121 residues: uncharacterized protein (121 aa).

The helical transmembrane segment at 65 to 84 (TILFYTPTLICFLFLQNFLY) threads the bilayer.

It is found in the membrane. This is an uncharacterized protein from Saccharomyces cerevisiae (strain ATCC 204508 / S288c) (Baker's yeast).